Consider the following 223-residue polypeptide: Cytidylate kinase (223 aa).

An ATP-binding site is contributed by 13 to 21; it reads GPSASGKGT.

It belongs to the cytidylate kinase family. Type 1 subfamily.

It localises to the cytoplasm. It catalyses the reaction CMP + ATP = CDP + ADP. The enzyme catalyses dCMP + ATP = dCDP + ADP. This Nitrosomonas europaea (strain ATCC 19718 / CIP 103999 / KCTC 2705 / NBRC 14298) protein is Cytidylate kinase.